The primary structure comprises 145 residues: CBS domain-containing protein DDB_G0289609 (145 aa).

CBS domains are found at residues M9–E66 and M84–V141.

The polypeptide is CBS domain-containing protein DDB_G0289609 (Dictyostelium discoideum (Social amoeba)).